Here is a 450-residue protein sequence, read N- to C-terminus: Phosphoglucosamine mutase (450 aa).

S101 functions as the Phosphoserine intermediate in the catalytic mechanism. Mg(2+) is bound by residues S101, D240, D242, and D244. A Phosphoserine modification is found at S101.

The protein belongs to the phosphohexose mutase family. Requires Mg(2+) as cofactor. In terms of processing, activated by phosphorylation.

The enzyme catalyses alpha-D-glucosamine 1-phosphate = D-glucosamine 6-phosphate. Catalyzes the conversion of glucosamine-6-phosphate to glucosamine-1-phosphate. This chain is Phosphoglucosamine mutase, found in Streptococcus thermophilus (strain CNRZ 1066).